A 478-amino-acid polypeptide reads, in one-letter code: Protein nucleotidyltransferase YdiU (478 aa).

Residues glycine 84, glycine 86, arginine 87, lysine 107, aspartate 119, glycine 120, arginine 170, and arginine 177 each contribute to the ATP site. Aspartate 246 acts as the Proton acceptor in catalysis. Positions 247 and 256 each coordinate Mg(2+). Aspartate 256 serves as a coordination point for ATP.

Belongs to the SELO family. It depends on Mg(2+) as a cofactor. Mn(2+) is required as a cofactor.

It catalyses the reaction L-seryl-[protein] + ATP = 3-O-(5'-adenylyl)-L-seryl-[protein] + diphosphate. The enzyme catalyses L-threonyl-[protein] + ATP = 3-O-(5'-adenylyl)-L-threonyl-[protein] + diphosphate. It carries out the reaction L-tyrosyl-[protein] + ATP = O-(5'-adenylyl)-L-tyrosyl-[protein] + diphosphate. The catalysed reaction is L-histidyl-[protein] + UTP = N(tele)-(5'-uridylyl)-L-histidyl-[protein] + diphosphate. It catalyses the reaction L-seryl-[protein] + UTP = O-(5'-uridylyl)-L-seryl-[protein] + diphosphate. The enzyme catalyses L-tyrosyl-[protein] + UTP = O-(5'-uridylyl)-L-tyrosyl-[protein] + diphosphate. Its function is as follows. Nucleotidyltransferase involved in the post-translational modification of proteins. It can catalyze the addition of adenosine monophosphate (AMP) or uridine monophosphate (UMP) to a protein, resulting in modifications known as AMPylation and UMPylation. The protein is Protein nucleotidyltransferase YdiU of Escherichia coli (strain ATCC 8739 / DSM 1576 / NBRC 3972 / NCIMB 8545 / WDCM 00012 / Crooks).